Consider the following 106-residue polypeptide: uncharacterized protein (106 aa).

2 helical membrane-spanning segments follow: residues leucine 46–phenylalanine 68 and alanine 73–alanine 92.

The protein resides in the cell membrane. This is an uncharacterized protein from Bacillus subtilis (strain 168).